Here is a 144-residue protein sequence, read N- to C-terminus: 3-dehydroquinate dehydratase (144 aa).

Y24 (proton acceptor) is an active-site residue. Substrate contacts are provided by N76, H82, and D89. The Proton donor role is filled by H102. Substrate contacts are provided by residues 103–104 (LS) and R113.

Belongs to the type-II 3-dehydroquinase family. Homododecamer.

The catalysed reaction is 3-dehydroquinate = 3-dehydroshikimate + H2O. Its pathway is metabolic intermediate biosynthesis; chorismate biosynthesis; chorismate from D-erythrose 4-phosphate and phosphoenolpyruvate: step 3/7. Its function is as follows. Catalyzes a trans-dehydration via an enolate intermediate. This is 3-dehydroquinate dehydratase from Bordetella petrii (strain ATCC BAA-461 / DSM 12804 / CCUG 43448).